The primary structure comprises 128 residues: Sulfurtransferase TusD (128 aa).

Cysteine 78 functions as the Cysteine persulfide intermediate in the catalytic mechanism.

The protein belongs to the DsrE/TusD family. Heterohexamer, formed by a dimer of trimers. The hexameric TusBCD complex contains 2 copies each of TusB, TusC and TusD. The TusBCD complex interacts with TusE.

It is found in the cytoplasm. Functionally, part of a sulfur-relay system required for 2-thiolation of 5-methylaminomethyl-2-thiouridine (mnm(5)s(2)U) at tRNA wobble positions. Accepts sulfur from TusA and transfers it in turn to TusE. The chain is Sulfurtransferase TusD from Klebsiella pneumoniae (strain 342).